The chain runs to 276 residues: Sulfur carrier protein FdhD (276 aa).

The Cysteine persulfide intermediate role is filled by Cys-122. 259 to 264 provides a ligand contact to Mo-bis(molybdopterin guanine dinucleotide); the sequence is FCKPGK.

This sequence belongs to the FdhD family.

It localises to the cytoplasm. Functionally, required for formate dehydrogenase (FDH) activity. Acts as a sulfur carrier protein that transfers sulfur from IscS to the molybdenum cofactor prior to its insertion into FDH. This Photorhabdus laumondii subsp. laumondii (strain DSM 15139 / CIP 105565 / TT01) (Photorhabdus luminescens subsp. laumondii) protein is Sulfur carrier protein FdhD.